The sequence spans 129 residues: MGKAKAPRQLKDNEAKAVARTLRVSPQKLNLVASMIRGKKVNAALADLTFSRKRIAGTVKKTLESAIANAENNHDLDVDALIVAEAYVGKSIVMKRFHVRDRGRASRIEKPFSHLTIVVREVAEKGKAA.

It belongs to the universal ribosomal protein uL22 family. Part of the 50S ribosomal subunit.

Functionally, this protein binds specifically to 23S rRNA; its binding is stimulated by other ribosomal proteins, e.g. L4, L17, and L20. It is important during the early stages of 50S assembly. It makes multiple contacts with different domains of the 23S rRNA in the assembled 50S subunit and ribosome. The globular domain of the protein is located near the polypeptide exit tunnel on the outside of the subunit, while an extended beta-hairpin is found that lines the wall of the exit tunnel in the center of the 70S ribosome. In Brucella abortus (strain 2308), this protein is Large ribosomal subunit protein uL22.